Reading from the N-terminus, the 336-residue chain is Glutamyl endopeptidase (336 aa).

Positions 1-29 (MKGKFLKVSSLFVATLTTATLVSSPAANA) are cleaved as a signal peptide. Positions 30–68 (LSSKAMDNHPQQTQSSKQQTPKIQKGGNLKPLEQREHAN) are excised as a propeptide. The interval 34–61 (AMDNHPQQTQSSKQQTPKIQKGGNLKPL) is disordered. Residues 39-51 (PQQTQSSKQQTPK) show a composition bias toward low complexity. Residues His-119, Asp-161, and Ser-237 each act as charge relay system in the active site. Residues 283–336 (FANDDQPNNPDNPDNPNNPDNPNNPDEPNNPDNPNNPDNPDNGDTNNSDNPDAA) are disordered. A compositionally biased stretch (low complexity) spans 286-336 (DDQPNNPDNPDNPNNPDNPNNPDEPNNPDNPNNPDNPDNGDTNNSDNPDAA). 11 consecutive repeat copies span residues 289–291 (PNN), 292–294 (PDN), 295–297 (PDN), 298–300 (PNN), 301–303 (PDN), 304–306 (PNN), 310–312 (PNN), 313–315 (PDN), 316–318 (PNN), 319–321 (PDN), and 322–324 (PDN). The tract at residues 289 to 324 (PNNPDNPDNPNNPDNPNNPDEPNNPDNPNNPDNPDN) is 11 X 3 AA repeats of P-[DN]-N.

The protein belongs to the peptidase S1B family. Post-translationally, proteolytically cleaved by aureolysin (aur). This cleavage leads to the activation of SspA.

The protein localises to the secreted. It carries out the reaction Preferential cleavage: Glu-|-Xaa, Asp-|-Xaa.. Its function is as follows. Preferentially cleaves peptide bonds on the carboxyl-terminal side of aspartate and glutamate. Along with other extracellular proteases it is involved in colonization and infection of human tissues. Required for proteolytic maturation of thiol protease SspB and inactivation of SspC, an inhibitor of SspB. It is the most important protease for degradation of fibronectin-binding protein (FnBP) and surface protein A, which are involved in adherence to host cells. May also protect bacteria against host defense mechanism by cleaving the immunoglobulin classes IgG, IgA and IgM. May be involved in the stability of secreted lipases. This Staphylococcus aureus (strain COL) protein is Glutamyl endopeptidase (sspA).